Consider the following 414-residue polypeptide: Serine hydroxymethyltransferase (414 aa).

Residues Leu-116 and 120–122 contribute to the (6S)-5,6,7,8-tetrahydrofolate site; that span reads GHL. An N6-(pyridoxal phosphate)lysine modification is found at Lys-224. (6S)-5,6,7,8-tetrahydrofolate is bound by residues Glu-240 and 348-350; that span reads SPF.

It belongs to the SHMT family. Homodimer. It depends on pyridoxal 5'-phosphate as a cofactor.

The protein localises to the cytoplasm. The catalysed reaction is (6R)-5,10-methylene-5,6,7,8-tetrahydrofolate + glycine + H2O = (6S)-5,6,7,8-tetrahydrofolate + L-serine. Its pathway is one-carbon metabolism; tetrahydrofolate interconversion. The protein operates within amino-acid biosynthesis; glycine biosynthesis; glycine from L-serine: step 1/1. Functionally, catalyzes the reversible interconversion of serine and glycine with tetrahydrofolate (THF) serving as the one-carbon carrier. This reaction serves as the major source of one-carbon groups required for the biosynthesis of purines, thymidylate, methionine, and other important biomolecules. Also exhibits THF-independent aldolase activity toward beta-hydroxyamino acids, producing glycine and aldehydes, via a retro-aldol mechanism. The chain is Serine hydroxymethyltransferase from Campylobacter concisus (strain 13826).